A 146-amino-acid polypeptide reads, in one-letter code: Ribosome-binding factor A (146 aa).

Positions 125 to 146 are disordered; it reads RDLDADDDKTKDDRAKDDKDSE.

This sequence belongs to the RbfA family. Monomer. Binds 30S ribosomal subunits, but not 50S ribosomal subunits or 70S ribosomes.

Its subcellular location is the cytoplasm. Functionally, one of several proteins that assist in the late maturation steps of the functional core of the 30S ribosomal subunit. Associates with free 30S ribosomal subunits (but not with 30S subunits that are part of 70S ribosomes or polysomes). Required for efficient processing of 16S rRNA. May interact with the 5'-terminal helix region of 16S rRNA. In Mesorhizobium japonicum (strain LMG 29417 / CECT 9101 / MAFF 303099) (Mesorhizobium loti (strain MAFF 303099)), this protein is Ribosome-binding factor A.